We begin with the raw amino-acid sequence, 333 residues long: HTH-type transcriptional repressor PurR (333 aa).

The HTH lacI-type domain occupies 2–56 (ATIKDVAKMAGVSTTTVSHVINKTRFVAKETEQQVLQAIKNLNYSPSAVARSLKV). The H-T-H motif DNA-binding region spans 4 to 23 (IKDVAKMAGVSTTTVSHVIN). The DNA-binding element occupies 48-56 (SAVARSLKV). Residues tyrosine 73, lysine 189, threonine 191, phenylalanine 220, and aspartate 274 each contribute to the hypoxanthine site.

Homodimer.

It functions in the pathway purine metabolism; purine nucleotide biosynthesis [regulation]. In terms of biological role, is the main repressor of the genes involved in the de novo synthesis of purine nucleotides, regulating purB, purC, purEK, purF, purHD, purL, purMN and guaBA expression. PurR is allosterically activated to bind its cognate DNA by binding the purine corepressors, hypoxanthine or guanine, thereby effecting transcription repression. The polypeptide is HTH-type transcriptional repressor PurR (Histophilus somni (strain 2336) (Haemophilus somnus)).